Here is a 64-residue protein sequence, read N- to C-terminus: DNA-binding protein 7b (64 aa).

2 positions are modified to N6-methyllysine: K5 and K7.

It belongs to the 7 kDa DNA-binding/endoribonuclease P2 family. As to quaternary structure, monomer. Lys-5 and Lys-7 may be methylated.

Its subcellular location is the cytoplasm. Can constrain negative DNA supercoils. May be involved in maintaining the integrity of the genome at high temperature. The sequence is that of DNA-binding protein 7b from Saccharolobus shibatae (strain ATCC 51178 / DSM 5389 / JCM 8931 / NBRC 15437 / B12) (Sulfolobus shibatae).